A 436-amino-acid polypeptide reads, in one-letter code: MSAKWERDSDASKGTLTFEIDVDTINKGIDEAFVETRKKITVPGFRKGRVPRQIFNQMYGEESLYQDALNKVLPDAYNEAVKETNIQPVDQPKIDIKSMEKGQPWVLTAEVDVMPEVKLGEYKGMEVPAQDTTVTDADVDDALETKRQQQAELVLKEDKPAEKGDTVVIDYKGSVDGEEFDGGSAENYSLELGSGSFIPGFEDQLIGHNADEDVDVNVTFPEDYHAKNLAGKDALFKVKIHEIKEKQLPELDDDFAKDVDEDVDTLAELKEKTKKQLQEEKDNQAKAAIEDAAINKAVANAEIQDIPQAMLDDDTNRQMQQYLAGMQQQGISPQMYFQITGTKEEDLKKQFANDAAQRVKTNLVLEAIVDDANLDATDEEIAKEISDLAKQYGMEEDAVKKALSKDMLMHDIKIRKAVDLVADSAKQVKDDEKSDK.

One can recognise a PPIase FKBP-type domain in the interval 164–249 (GDTVVIDYKG…IHEIKEKQLP (86 aa)).

This sequence belongs to the FKBP-type PPIase family. Tig subfamily.

The protein resides in the cytoplasm. It carries out the reaction [protein]-peptidylproline (omega=180) = [protein]-peptidylproline (omega=0). In terms of biological role, involved in protein export. Acts as a chaperone by maintaining the newly synthesized protein in an open conformation. Functions as a peptidyl-prolyl cis-trans isomerase. This chain is Trigger factor, found in Limosilactobacillus reuteri (strain DSM 20016) (Lactobacillus reuteri).